Reading from the N-terminus, the 505-residue chain is ATP-dependent RNA helicase HAS1 (505 aa).

Positions 1 to 37 (MATPSNKRSRDSESTEEPVVDEKSTSKQNNAAPEGEQ) are disordered. A Phosphoserine modification is found at Ser-12. Residues 26–37 (SKQNNAAPEGEQ) show a composition bias toward polar residues. A Q motif motif is present at residues 42–70 (EKFEELKLSQPTLKAIEKMGFTTMTSVQA). One can recognise a Helicase ATP-binding domain in the interval 73–249 (IPPLLAGRDV…RISLRPGPLF (177 aa)). Position 86-93 (86-93 (AKTGSGKT)) interacts with ATP. Residues 196-199 (DEAD) carry the DEAD box motif. A Helicase C-terminal domain is found at 263–433 (GLEQGYVVCD…NVQSQLEKLI (171 aa)). The short motif at 275-291 (KRFLLLFSFLKRNQKKK) is the Bipartite nuclear localization signal element.

This sequence belongs to the DEAD box helicase family. DDX18/HAS1 subfamily. In terms of assembly, interacts with RRP1. Associates in the nucleolus with the 60S and pre-60S ribosomal subunits. It has also been isolated with the nuclear pore complex. Phosphorylated by CDK1.

Its subcellular location is the nucleus. It localises to the nucleolus. It catalyses the reaction ATP + H2O = ADP + phosphate + H(+). Its function is as follows. ATP-dependent RNA helicase involved in 40S ribosomal subunit biogenesis. Required for the processing and cleavage of 35S pre-rRNA at sites A0, A1, and A2, leading to mature 18S rRNA. This Saccharomyces cerevisiae (strain ATCC 204508 / S288c) (Baker's yeast) protein is ATP-dependent RNA helicase HAS1 (HAS1).